The following is a 20-amino-acid chain: LKCNKLVPLFYKTCPAGKNL.

The protein belongs to the three-finger toxin family. Short-chain subfamily. Type IA cytotoxin sub-subfamily. In terms of assembly, monomer in solution; Homodimer and oligomer in the presence of negatively charged lipids forming a pore with a size ranging between 20 and 30 Angstroms. Expressed by the venom gland.

The protein localises to the secreted. Its subcellular location is the target cell membrane. This three-finger cytotoxin has antiproliferative, cytotoxic and apoptotic activities. Both in vivo and in vitro experimental results suggests that this protein possess anticancer potential. Also shows neurotoxicity, cardiotoxicity and myotoxicity. The polypeptide is Cytotoxin drCT-1 (Daboia russelii (Russel's viper)).